The primary structure comprises 196 residues: 7-methyl-GTP pyrophosphatase (196 aa).

Aspartate 72 (proton acceptor) is an active-site residue.

Belongs to the Maf family. YceF subfamily. Requires a divalent metal cation as cofactor.

The protein resides in the cytoplasm. It catalyses the reaction N(7)-methyl-GTP + H2O = N(7)-methyl-GMP + diphosphate + H(+). In terms of biological role, nucleoside triphosphate pyrophosphatase that hydrolyzes 7-methyl-GTP (m(7)GTP). May have a dual role in cell division arrest and in preventing the incorporation of modified nucleotides into cellular nucleic acids. In Neisseria meningitidis serogroup A / serotype 4A (strain DSM 15465 / Z2491), this protein is 7-methyl-GTP pyrophosphatase.